A 523-amino-acid polypeptide reads, in one-letter code: Protein disulfide-isomerase (523 aa).

A signal peptide spans 1-22 (MPGVRSLLLALAGVSLAPAVLA). Residues 24–137 (DASTDSSDVH…TSYMIKQSLP (114 aa)) form the Thioredoxin 1 domain. Residues cysteine 59 and cysteine 62 each act as nucleophile in the active site. An intrachain disulfide couples cysteine 59 to cysteine 62. A glycan (N-linked (GlcNAc...) asparagine) is linked at asparagine 170. Residues 344 to 475 (VIAGDIAPSV…LANFVRDNGK (132 aa)) enclose the Thioredoxin 2 domain. Cysteine 394 and cysteine 397 are disulfide-bonded. 2 stretches are compositionally biased toward basic and acidic residues: residues 478 to 502 (VDAY…DAEA) and 512 to 523 (SEEKADKEHEEL). The interval 478–523 (VDAYDEKKVEKDGSDVTGKPKDAEAPPKPSDAPESEEKADKEHEEL) is disordered. Residues 520–523 (HEEL) carry the Prevents secretion from ER motif.

It belongs to the protein disulfide isomerase family.

It is found in the endoplasmic reticulum lumen. It catalyses the reaction Catalyzes the rearrangement of -S-S- bonds in proteins.. Functionally, participates in the folding of proteins containing disulfide bonds, may be involved in glycosylation, prolyl hydroxylation and triglyceride transfer. The sequence is that of Protein disulfide-isomerase from Arthroderma benhamiae (strain ATCC MYA-4681 / CBS 112371) (Trichophyton mentagrophytes).